Consider the following 116-residue polypeptide: Translation initiation factor 1A (116 aa).

A disordered region spans residues 1–25 (MRCLSKKHQKQGDEHGGEIPLPNPD). Residues 17 to 91 (GEIPLPNPDE…EKGEVVYKYG (75 aa)) enclose the S1-like domain.

Belongs to the eIF-1A family.

Functionally, seems to be required for maximal rate of protein biosynthesis. Enhances ribosome dissociation into subunits and stabilizes the binding of the initiator Met-tRNA(I) to 40 S ribosomal subunits. The protein is Translation initiation factor 1A (eIF1A) of Desulfurococcus amylolyticus (strain DSM 18924 / JCM 16383 / VKM B-2413 / 1221n) (Desulfurococcus kamchatkensis).